Here is a 243-residue protein sequence, read N- to C-terminus: Biosynthetic peptidoglycan transglycosylase (243 aa).

The helical transmembrane segment at 21 to 43 (LLIVSLVSALMSVLQVIVFRFVD) threads the bilayer.

Belongs to the glycosyltransferase 51 family.

It localises to the cell inner membrane. It carries out the reaction [GlcNAc-(1-&gt;4)-Mur2Ac(oyl-L-Ala-gamma-D-Glu-L-Lys-D-Ala-D-Ala)](n)-di-trans,octa-cis-undecaprenyl diphosphate + beta-D-GlcNAc-(1-&gt;4)-Mur2Ac(oyl-L-Ala-gamma-D-Glu-L-Lys-D-Ala-D-Ala)-di-trans,octa-cis-undecaprenyl diphosphate = [GlcNAc-(1-&gt;4)-Mur2Ac(oyl-L-Ala-gamma-D-Glu-L-Lys-D-Ala-D-Ala)](n+1)-di-trans,octa-cis-undecaprenyl diphosphate + di-trans,octa-cis-undecaprenyl diphosphate + H(+). It participates in cell wall biogenesis; peptidoglycan biosynthesis. In terms of biological role, peptidoglycan polymerase that catalyzes glycan chain elongation from lipid-linked precursors. This is Biosynthetic peptidoglycan transglycosylase from Xylella fastidiosa (strain M12).